The following is a 91-amino-acid chain: Acylphosphatase (91 aa).

Residues 3–91 (CLRAIVKGKV…ANYSDFRIKH (89 aa)) form the Acylphosphatase-like domain. Residues arginine 18 and asparagine 36 contribute to the active site.

The protein belongs to the acylphosphatase family.

The enzyme catalyses an acyl phosphate + H2O = a carboxylate + phosphate + H(+). The chain is Acylphosphatase (acyP) from Dehalococcoides mccartyi (strain CBDB1).